The primary structure comprises 306 residues: Protoheme IX farnesyltransferase (306 aa).

The next 8 membrane-spanning stretches (helical) occupy residues 31-50, 55-77, 104-124, 125-145, 168-188, 218-235, 238-258, and 286-306; these read VIEL…QGGW, LILG…NCYI, LVFA…ISNW, LAAA…TLWL, WAAV…IVFL, GRAA…ATLA, LLLI…LAGG, and ASIS…LLPF.

The protein belongs to the UbiA prenyltransferase family. Protoheme IX farnesyltransferase subfamily.

The protein resides in the cell membrane. The enzyme catalyses heme b + (2E,6E)-farnesyl diphosphate + H2O = Fe(II)-heme o + diphosphate. It participates in porphyrin-containing compound metabolism; heme O biosynthesis; heme O from protoheme: step 1/1. In terms of biological role, converts heme B (protoheme IX) to heme O by substitution of the vinyl group on carbon 2 of heme B porphyrin ring with a hydroxyethyl farnesyl side group. The sequence is that of Protoheme IX farnesyltransferase from Clavibacter michiganensis subsp. michiganensis (strain NCPPB 382).